The primary structure comprises 4836 residues: E3 ubiquitin-protein ligase HERC2 (4836 aa).

Residues 58 to 90 (LPLRKDDGVDAQSGTKKEDLNDKEKKEEEETPA) form a disordered region. The segment covering 72–85 (TKKEDLNDKEKKEE) has biased composition (basic and acidic residues). T273 is subject to Phosphothreonine. The RCC1 1-1 repeat unit spans residues 416–462 (PTSHKGSLQEVIGWGLIGWKYYANVIGPIQCEGLASLGVMQVACAEK). The RCC1 1-2 repeat unit spans residues 463 to 513 (RFLILSRNGRVYTQAYNSDMLAPQLVQGLASRNIVKIAAHSDGHHYLALAA). An RCC1 1-3 repeat occupies 514-569 (TGEVYSWGCGDGGRLGHGDTVPLEEPKVISAFSGKQAGKHVVHIACGSTYSAAITA). Residues 570 to 621 (EGELYTWGRGNYGRLGHGSSEDEAIPMLVAGLKGLKVIDVACGSGDAQTLAV) form an RCC1 1-4 repeat. The stretch at 624–675 (NGQVWSWGDGDYGKLGRGGSDGCKTPKLIEKLQDLDVIKVRCGSQFSIALTK) is one RCC1 1-5 repeat. T648 is modified (phosphothreonine). The RCC1 1-6 repeat unit spans residues 676 to 727 (DGQVYSWGKGDNQRLGHGTEEHVRYPKLLEGLQGKKVIDVAAGSTHCLALTE). The RCC1 1-7 repeat unit spans residues 729–779 (SEVHSWGSNDQCQHFDTLRVTKPEPTALPGLDSKHIVGIACGPAQSFAWSS). Residues 948–981 (ALNAAITAEIQDIEAKKEAQKEKEIDEQEASAST) adopt a coiled-coil conformation. In terms of domain architecture, Cytochrome b5 heme-binding spans 1208-1284 (VTLIRKADLE…MHAFCVGQYL (77 aa)). S1578 carries the phosphoserine modification. The region spanning 1860 to 1933 (SGPELAAMMK…KYDLKLVELP (74 aa)) is the MIB/HERC2 domain. A Phosphoserine modification is found at S1943. T1945 carries the phosphothreonine modification. Residues 2351–2376 (GTGTLQTDDGAAASPDLGDMSPEGPQ) are disordered. The residue at position 2455 (S2455) is a Phosphoserine. The CPH domain occupies 2555 to 2631 (RADFLSNDDY…RYIHVELIGY (77 aa)). The ZZ-type zinc finger occupies 2704-2756 (HPGVTCDGCQTFPINGSRFKCRNCDDFDFCETCFKTKKHNTRHTFGRINEPGQ). Residues C2709, C2712, C2724, C2727, C2733, C2736, H2742, and H2746 each contribute to the Zn(2+) site. Positions 2760–2937 (FCGRSGKQLK…ASDNEEEEDD (178 aa)) constitute a DOC domain. Residues 2928-2947 (ASDNEEEEDDKGSTGSLIRK) form a disordered region. Residue S2929 is modified to Phosphoserine. The stretch at 2959–3010 (RTKVFVWGLNDKDQLGGLKGSKIKVPSFSETLSALNVVQVAGGSKSLFAVTV) is one RCC1 2-1 repeat. The stretch at 3011–3065 (EGKVYSCGEATNGRLGLGMSSGTVPIPRQITALSSYVVKKVAVHSGGRHATALTV) is one RCC1 2-2 repeat. An RCC1 2-3 repeat occupies 3066–3117 (DGKVFSWGEGDDGKLGHFSRMNCDKPRLIEALKTKRIRDIACGSSHSAALTS). The stretch at 3119–3169 (GELYTWGLGEYGRLGHGDNTTQLKPKMVKVLLGHRVIQVACGSRDAQTLAL) is one RCC1 2-4 repeat. Residues 3172–3223 (EGLVFSWGDGDFGKLGRGGSEGCNIPQNIERLNGQGVCQIECGAQFSLALTK) form an RCC1 2-5 repeat. The stretch at 3225–3275 (GVVWTWGKGDYFRLGHGSDVHVRKPQVVEGLRGKKIVHVAVGALHCLAVTD) is one RCC1 2-6 repeat. Residues 3276-3327 (SGQVYAWGDNDHGQQGNGTTTVNRKPTLVQGLEGQKITRVACGSSHSVAWTT) form an RCC1 2-7 repeat. Disordered stretches follow at residues 3479–3499 (DAVT…RPFI), 3517–3537 (KTKE…QSLD), and 3604–3632 (SQSG…SGTV). A compositionally biased stretch (low complexity) spans 3480 to 3495 (AVTPSAVTPSAPSASS). Composition is skewed to polar residues over residues 3604–3613 (SQSGRLSSQP) and 3620–3631 (HPYTDDTSTSGT). Residues 3953-4004 (SGTIYGWGHNHRGQLGGIEGAKVKVPTPCEALATLRPVQLIGGEQTLFAVTA) form an RCC1 3-1 repeat. Residues 4006–4058 (GKLYATGYGAGGRLGIGGTESVSTPTLLESIQHVFIKKVAVNSGGKHCLALSS) form an RCC1 3-2 repeat. The stretch at 4060 to 4110 (GEVYSWGEAEDGKLGHGNRSPCDRPRVIESLRGIEVVDVAAGGAHSACVTA) is one RCC1 3-3 repeat. One copy of the RCC1 3-4 repeat lies at 4112–4164 (GDLYTWGKGRYGRLGHSDSEDQLKPKLVEALQGHRVIDIACGSGDAQTLCLTD). The stretch at 4166 to 4216 (DTVWSWGDGDYGKLGRGGSDGCKVPMKIDSLTGLGVVKVECGSQFSVALTK) is one RCC1 3-5 repeat. Residues 4218-4268 (GAVYTWGKGDYHRLGHGSDDHVRRPRQVQGLQGKKVIAIATGSLHCVCCTE) form an RCC1 3-6 repeat. One copy of the RCC1 3-7 repeat lies at 4270-4320 (GEVYTWGDNDEGQLGDGTTNAIQRPRLVAALQGKKVNRVACGSAHTLAWST). In terms of domain architecture, HECT spans 4459–4796 (DSLLLPHRVW…IHFCKSIDTD (338 aa)). C4764 acts as the Glycyl thioester intermediate in catalysis. A disordered region spans residues 4806 to 4836 (EPAADDSSEDSDNEDADSFASDSTQDYLTGH). Residues 4808–4822 (AADDSSEDSDNEDAD) show a composition bias toward acidic residues. S4812, S4813, and S4816 each carry phosphoserine. A Phosphothreonine modification is found at T4829.

Interacts (when phosphorylated at Thr-4829 and sumoylated) with RNF8 (via FHA domain); this interaction increases after ionising radiation (IR) treatment. Interacts with XPA. Interacts with NEURL4. Via its interaction with NEURL4, may indirectly interact with CCP110 and CEP97. In terms of processing, phosphorylation at Thr-4829 is required for interaction with RNF8. Post-translationally, sumoylated with SUMO1 by PIAS4 in response to double-strand breaks (DSBs), promoting the interaction with RNF8. As to expression, highest levels are found in brain and testis with lower levels in heart, lung, liver, skeletal muscle and kidney. Little expression detected in spleen.

It localises to the cytoplasm. Its subcellular location is the cytoskeleton. The protein resides in the microtubule organizing center. It is found in the centrosome. The protein localises to the centriole. It localises to the nucleus. The catalysed reaction is S-ubiquitinyl-[E2 ubiquitin-conjugating enzyme]-L-cysteine + [acceptor protein]-L-lysine = [E2 ubiquitin-conjugating enzyme]-L-cysteine + N(6)-ubiquitinyl-[acceptor protein]-L-lysine.. It participates in protein modification; protein ubiquitination. Its function is as follows. E3 ubiquitin-protein ligase that regulates ubiquitin-dependent retention of repair proteins on damaged chromosomes. Recruited to sites of DNA damage in response to ionizing radiation (IR) and facilitates the assembly of UBE2N and RNF8 promoting DNA damage-induced formation of 'Lys-63'-linked ubiquitin chains. Acts as a mediator of binding specificity between UBE2N and RNF8. Involved in the maintenance of RNF168 levels. E3 ubiquitin-protein ligase that promotes the ubiquitination and proteasomal degradation of XPA which influences the circadian oscillation of DNA excision repair activity. By controlling the steady-state expression of the IGF1R receptor, indirectly regulates the insulin-like growth factor receptor signaling pathway. Also modulates iron metabolism by regulating the basal turnover of FBXL5. In Mus musculus (Mouse), this protein is E3 ubiquitin-protein ligase HERC2.